The sequence spans 688 residues: UvrABC system protein B (688 aa).

One can recognise a Helicase ATP-binding domain in the interval 31-188; sequence GRVNAGEPDV…RKFVSMQYQR (158 aa). 44-51 is an ATP binding site; that stretch reads GATGTGKS. A Beta-hairpin motif is present at residues 97 to 120; sequence YYDYYQPEAYVPQTDTFIEKDSSV. The Helicase C-terminal domain occupies 434–587; it reads QIDDLLEQIR…QVAYNTEHGI (154 aa). The interval 607–632 is disordered; the sequence is GEDTKKMLEGRGGGKRSPTPNLRREG. One can recognise a UVR domain in the interval 642–677; it reads ETIISDLNDQMLQAAGELKFELAARLRDELGDLKRE.

The protein belongs to the UvrB family. As to quaternary structure, forms a heterotetramer with UvrA during the search for lesions. Interacts with UvrC in an incision complex.

The protein resides in the cytoplasm. Functionally, the UvrABC repair system catalyzes the recognition and processing of DNA lesions. A damage recognition complex composed of 2 UvrA and 2 UvrB subunits scans DNA for abnormalities. Upon binding of the UvrA(2)B(2) complex to a putative damaged site, the DNA wraps around one UvrB monomer. DNA wrap is dependent on ATP binding by UvrB and probably causes local melting of the DNA helix, facilitating insertion of UvrB beta-hairpin between the DNA strands. Then UvrB probes one DNA strand for the presence of a lesion. If a lesion is found the UvrA subunits dissociate and the UvrB-DNA preincision complex is formed. This complex is subsequently bound by UvrC and the second UvrB is released. If no lesion is found, the DNA wraps around the other UvrB subunit that will check the other stand for damage. The polypeptide is UvrABC system protein B (Clavibacter sepedonicus (Clavibacter michiganensis subsp. sepedonicus)).